Reading from the N-terminus, the 359-residue chain is Phosphoserine aminotransferase (359 aa).

R41 contributes to the L-glutamate binding site. Residues 75–76 (AS), W99, T147, D166, and Q189 each bind pyridoxal 5'-phosphate. K190 bears the N6-(pyridoxal phosphate)lysine mark. A pyridoxal 5'-phosphate-binding site is contributed by 231 to 232 (NT).

This sequence belongs to the class-V pyridoxal-phosphate-dependent aminotransferase family. SerC subfamily. In terms of assembly, homodimer. It depends on pyridoxal 5'-phosphate as a cofactor.

The protein resides in the cytoplasm. It catalyses the reaction O-phospho-L-serine + 2-oxoglutarate = 3-phosphooxypyruvate + L-glutamate. The enzyme catalyses 4-(phosphooxy)-L-threonine + 2-oxoglutarate = (R)-3-hydroxy-2-oxo-4-phosphooxybutanoate + L-glutamate. It functions in the pathway amino-acid biosynthesis; L-serine biosynthesis; L-serine from 3-phospho-D-glycerate: step 2/3. The protein operates within cofactor biosynthesis; pyridoxine 5'-phosphate biosynthesis; pyridoxine 5'-phosphate from D-erythrose 4-phosphate: step 3/5. In terms of biological role, catalyzes the reversible conversion of 3-phosphohydroxypyruvate to phosphoserine and of 3-hydroxy-2-oxo-4-phosphonooxybutanoate to phosphohydroxythreonine. The protein is Phosphoserine aminotransferase of Azobacteroides pseudotrichonymphae genomovar. CFP2.